Reading from the N-terminus, the 201-residue chain is Potassium-transporting ATPase KdpC subunit (201 aa).

A helical transmembrane segment spans residues 13-33 (IIFMIFTILCGGIYTIFITGI).

It belongs to the KdpC family. In terms of assembly, the system is composed of three essential subunits: KdpA, KdpB and KdpC.

It is found in the cell membrane. Functionally, part of the high-affinity ATP-driven potassium transport (or Kdp) system, which catalyzes the hydrolysis of ATP coupled with the electrogenic transport of potassium into the cytoplasm. This subunit acts as a catalytic chaperone that increases the ATP-binding affinity of the ATP-hydrolyzing subunit KdpB by the formation of a transient KdpB/KdpC/ATP ternary complex. The chain is Potassium-transporting ATPase KdpC subunit from Clostridium botulinum (strain Eklund 17B / Type B).